Reading from the N-terminus, the 228-residue chain is Cytidylate kinase (228 aa).

Residue 12–20 participates in ATP binding; the sequence is GPASAGKST.

The protein belongs to the cytidylate kinase family. Type 1 subfamily.

The protein resides in the cytoplasm. It carries out the reaction CMP + ATP = CDP + ADP. The enzyme catalyses dCMP + ATP = dCDP + ADP. The protein is Cytidylate kinase of Lactiplantibacillus plantarum (strain ATCC BAA-793 / NCIMB 8826 / WCFS1) (Lactobacillus plantarum).